The chain runs to 956 residues: ATPase 11, plasma membrane-type (956 aa).

Residues 1-65 (MGDKEEVLEA…EKKESKFLKF (65 aa)) lie on the Cytoplasmic side of the membrane. The chain crosses the membrane as a helical span at residues 66 to 85 (LGFMWNPLSWVMEAAAIMAI). Residues 86-97 (ALANGGGKPPDW) are Extracellular-facing. A helical transmembrane segment spans residues 98-118 (QDFVGIITLLVINSTISFIEE). Residues 119 to 247 (NNAGNAAAAL…GHFQQVLTAI (129 aa)) lie on the Cytoplasmic side of the membrane. The chain crosses the membrane as a helical span at residues 248-268 (GNFCICSIAVGMIIEIVVMYP). At 269–277 (IQHRAYRPG) the chain is on the extracellular side. Residues 278–295 (IDNLLVLLIGGIPIAMPT) form a helical membrane-spanning segment. The Cytoplasmic segment spans residues 296-647 (VLSVTMAIGS…TSRAIFQRMK (352 aa)). The 4-aspartylphosphate intermediate role is filled by D333. Mg(2+) is bound by residues D592 and D596. Residues 648 to 669 (NYTIYAVSITIRIVLGFMLLAL) traverse the membrane as a helical segment. Topologically, residues 670–674 (IWKFD) are extracellular. Residues 675 to 697 (FPPFMVLIIAILNDGTIMTISKD) traverse the membrane as a helical segment. The Cytoplasmic segment spans residues 698–713 (RVKPSPLPDSWKLSEI). Residues 714–734 (FATGVVFGSYMAMMTVIFFWA) traverse the membrane as a helical segment. Residues 735-759 (AYKTDFFPRTFGVSTLEKTAHDDFR) lie on the Extracellular side of the membrane. A helical transmembrane segment spans residues 760–780 (KLASAIYLQVSIISQALIFVT). Residues 781-792 (RSRSWSYVERPG) are Cytoplasmic-facing. A helical transmembrane segment spans residues 793–813 (MLLVVAFILAQLVATLIAVYA). Residues 814–821 (NWSFAAIE) are Extracellular-facing. Residues 822–842 (GIGWGWAGVIWLYNIVFYIPL) form a helical membrane-spanning segment. Over 843–956 (DIIKFLIRYA…IETIQQAYTV (114 aa)) the chain is Cytoplasmic. Position 889 is a phosphothreonine (T889). Position 938 is a phosphoserine (S938). The interval 954–956 (YTV) is interaction with 14-3-3 proteins. T955 carries the phosphothreonine modification.

Belongs to the cation transport ATPase (P-type) (TC 3.A.3) family. Type IIIA subfamily. Binds to 14-3-3 proteins. The binding is induced by phosphorylation of Thr-955. Binding to 14-3-3 proteins activates the H(+)-ATPase. As to expression, expressed in guard cells, mesophyll cells, leaves and roots.

Its subcellular location is the membrane. The catalysed reaction is ATP + H2O + H(+)(in) = ADP + phosphate + 2 H(+)(out). Its function is as follows. The plasma membrane H(+) ATPase of plants and fungi generates a proton gradient that drives the active transport of nutrients by H(+)-symport. The resulting external acidification and/or internal alkinization may mediate growth responses. The chain is ATPase 11, plasma membrane-type (AHA11) from Arabidopsis thaliana (Mouse-ear cress).